We begin with the raw amino-acid sequence, 863 residues long: Receptor-like protein Cf-9 (863 aa).

Positions 1–21 (MDCVKLVFLMLYTFLCQLALS) are cleaved as a signal peptide. Residues 22 to 812 (SSLPHLCPED…EEDSPMISWQ (791 aa)) are Extracellular-facing. The segment at 24–91 (LPHLCPEDQA…GVHCDETTGQ (68 aa)) is N-cap. Residues Asn48, Asn72, Asn109, Asn127, Asn142, Asn191, Asn204, and Asn212 are each glycosylated (N-linked (GlcNAc...) asparagine). One copy of the LRR 1; degenerate repeat lies at 92 to 115 (VIALDLRCSQLQGKFHSNSSLFQL). LRR repeat units follow at residues 116 to 139 (SNLKRLDLSFNNFTGSLISPKFGE) and 141 to 164 (SNLTHLDLSHSSFTGLIPSEICHL). One copy of the LRR 4; degenerate repeat lies at 165–191 (SKLHVLRICDQYGLSLVPYNFELLLKN). LRR repeat units follow at residues 192-214 (LTQLRELNLESVNISSTIPSNFS), 215-238 (SHLTTLQLSGTELHGILPERVFHL), 241-263 (LQSLHLSVNPQLTVRFPTTKWNS), 265-287 (ASLMTLYVDSVNIADRIPKSFSH), 288-312 (LTSLHELYMGRCNLSGPIPKPLWNL), 314-335 (NIVFLHLGDNHLEGPISHFTIF), 336-358 (EKLKRLSLVNNNFDGGLEFLSFN), 359-382 (TQLERLDLSSNSLTGPIPSNISGL), 383-406 (QNLECLYLSSNHLNGSIPSWIFSL), 408-428 (SLVELDLSNNTFSGKIQEFKS), 429-452 (KTLSAVTLKQNKLKGRIPNSLLNQ), 454-476 (NLQLLLLSHNNISGHISSAICNL), 477-500 (KTLILLDLGSNNLEGTIPQCVVER), 502-524 (EYLSHLDLSKNRLSGTINTTFSV), 525-549 (GNILRVISLHGNKLTGKVPRSMINC), 551-572 (YLTLLDLGNNMLNDTFPNWLGY), 573-597 (LFQLKILSLRSNKLHGPIKSSGNTN), 599-623 (FMGLQILDLSSNGFSGNLPERILGN), 667-690 (LDSNMIINLSKNRFEGHIPSIIGD), 691-714 (LVGLRTLNLSHNVLEGHIPASFQN), 715-739 (LSVLESLDLSSNKISGEIPQQLASL), and 741-759 (FLEVLNLSHNHLVGCIPKG). Asn262 carries an N-linked (GlcNAc...) asparagine glycan. Residues Asn300 and Asn311 are each glycosylated (N-linked (GlcNAc...) asparagine). 3 N-linked (GlcNAc...) asparagine glycosylation sites follow: Asn378, Asn396, and Asn416. N-linked (GlcNAc...) asparagine glycosylation is present at Asn464. Residue Asn519 is glycosylated (N-linked (GlcNAc...) asparagine). N-linked (GlcNAc...) asparagine glycosylation occurs at Asn563. N-linked (GlcNAc...) asparagine glycosylation is found at Asn698 and Asn714. Asn746 and Asn767 each carry an N-linked (GlcNAc...) asparagine glycan. The interval 760 to 812 (KQFDSFGNTSYQGNDGLRGFPLSKLCGGEDQVTTPAELDQEEEEEDSPMISWQ) is C-cap/acidic domain. The chain crosses the membrane as a helical span at residues 813–833 (GVLVGYGCGLVIGLSVIYIMW). Residues 834–863 (STQYPAWFSRMDLKLEHIITTKMKKHKKRY) lie on the Cytoplasmic side of the membrane.

This sequence belongs to the RLP family. In terms of assembly, interacts with thioredoxin-like protein CITRX.

The protein localises to the cell membrane. Functionally, involved in plant defense. Confers resistance to the fungal pathogen C.fulvum through recognition of the AVR9 elicitor protein. The polypeptide is Receptor-like protein Cf-9 (Solanum pimpinellifolium (Currant tomato)).